The chain runs to 1309 residues: Target of rapamycin complex 2 subunit ste20 (1309 aa).

Residues 24–110 (DFIKKMNTTD…IESFQGENGE (87 aa)) form the REM-1 domain. Residues 105–128 (QGENGEAKTGSTSLTRSASATVSR) are disordered. Residues 113 to 128 (TGSTSLTRSASATVSR) show a composition bias toward polar residues. The residue at position 151 (Ser151) is a Phosphoserine. Residues 183–205 (NVNEKNNSSSEDTQPNGKRPSSL) are disordered. A compositionally biased stretch (polar residues) spans 194 to 205 (DTQPNGKRPSSL). 6 consecutive transmembrane segments (helical) span residues 285 to 305 (LFLD…WILS), 392 to 412 (LIDG…LVYL), 504 to 524 (VIDL…ESFL), 564 to 584 (TAVL…VCMI), 926 to 946 (LNHW…LEVC), and 984 to 1004 (LLLR…INFI). Phosphothreonine is present on Thr1203.

This sequence belongs to the RICTOR family. As to quaternary structure, the target of rapamycin complex 2 (TORC2) is composed of at least bit61, pop3/wat1, sin1, ste20 and tor1. Either Ser-203 or Ser-204 are phosphorylated as well.

Its subcellular location is the membrane. In terms of biological role, component of TORC2, which regulates multiple cellular processes to control cell growth in response to environmental signals. TORC2 is required for cell survival under various stress conditions. TORC2 positively controls G1 cell-cycle arrest, sexual development and amino acid uptake. Positively regulates amino acid uptake through the control of expression of amino acid permeases. The sequence is that of Target of rapamycin complex 2 subunit ste20 from Schizosaccharomyces pombe (strain 972 / ATCC 24843) (Fission yeast).